Reading from the N-terminus, the 141-residue chain is MNKGEDNLVRTSITVPEQLLQKVNELIASGYFASRSEIFRQALREYLQRIEWTERVGDEEYFGALTYVFQHERAEPELVKVQHEFTDVIISTTHIHVSPEKCLEVLLLQGPGKRIAELAKRIRGVRGVEQAKLTVVSSEGE.

Positions 83, 94, 96, and 102 each coordinate Ni(2+).

The protein belongs to the transcriptional regulatory CopG/NikR family. Ni(2+) is required as a cofactor.

In terms of biological role, transcriptional regulator. The sequence is that of Putative nickel-responsive regulator from Methanopyrus kandleri (strain AV19 / DSM 6324 / JCM 9639 / NBRC 100938).